The following is a 115-amino-acid chain: Non-specific lipid-transfer protein 4.2 (115 aa).

An N-terminal signal peptide occupies residues 1 to 25 (MARAAATQLVLVAMVAAMLIVATDA). 4 disulfides stabilise this stretch: Cys29/Cys77, Cys39/Cys54, Cys55/Cys97, and Cys75/Cys111.

The protein belongs to the plant LTP family.

Plant non-specific lipid-transfer proteins transfer phospholipids as well as galactolipids across membranes. May play a role in wax or cutin deposition in the cell walls of expanding epidermal cells and certain secretory tissues. This is Non-specific lipid-transfer protein 4.2 (LTP4.2) from Hordeum vulgare (Barley).